A 1228-amino-acid chain; its full sequence is Membrane-anchored lipid-binding protein LAM1 (1228 aa).

The Cytoplasmic portion of the chain corresponds to M1–K1062. One can recognise a PH domain in the interval E308 to R421. The region spanning E773–N978 is the VASt domain. The chain crosses the membrane as a helical span at residues T1063–I1083. The Lumenal portion of the chain corresponds to H1084–V1228. N1205 is a glycosylation site (N-linked (GlcNAc...) asparagine).

This sequence belongs to the SIP3 family.

The protein localises to the mitochondrion membrane. Its subcellular location is the endoplasmic reticulum membrane. Involved in mitochondrial fragmentation during programmed cell death in response to high levels of alpha-factor mating pheromone or the drug amiodarone. May be involved in sterol transfer between intracellular membranes. This chain is Membrane-anchored lipid-binding protein LAM1, found in Saccharomyces cerevisiae (strain ATCC 204508 / S288c) (Baker's yeast).